Here is an 88-residue protein sequence, read N- to C-terminus: Large ribosomal subunit protein bL27 (88 aa).

Residues Met-1–Leu-21 are disordered.

This sequence belongs to the bacterial ribosomal protein bL27 family.

The sequence is that of Large ribosomal subunit protein bL27 from Pelotomaculum thermopropionicum (strain DSM 13744 / JCM 10971 / SI).